We begin with the raw amino-acid sequence, 90 residues long: Elongation factor 1-beta (90 aa).

It belongs to the EF-1-beta/EF-1-delta family.

Its function is as follows. Promotes the exchange of GDP for GTP in EF-1-alpha/GDP, thus allowing the regeneration of EF-1-alpha/GTP that could then be used to form the ternary complex EF-1-alpha/GTP/AAtRNA. In Aeropyrum pernix (strain ATCC 700893 / DSM 11879 / JCM 9820 / NBRC 100138 / K1), this protein is Elongation factor 1-beta (ef1b).